The following is a 677-amino-acid chain: Protein PALS1 (677 aa).

Residues 1 to 347 (MTTSHMNGYV…AQIKSPPIKE (347 aa)) are required for the correct localization of PALS1 and PATJ at cell-cell contacts and the normal formation of tight junctions and adherens junctions. The tract at residues 39 to 81 (ELGARTLPVRRSAQLEKIRQQQEDRRRREEEGRSRQELDLNSS) is disordered. The segment covering 51–76 (AQLEKIRQQQEDRRRREEEGRSRQEL) has biased composition (basic and acidic residues). L27 domains are found at residues 121–178 (ALLE…NRPS) and 180–236 (PYPL…MQLE). Positions 258 to 338 (IVRIEKAKDI…VLSFVLIPSA (81 aa)) constitute a PDZ domain. The region spanning 347 to 419 (ETVVHVKAHF…PGKSFQQQRE (73 aa)) is the SH3 domain. A Guanylate kinase-like domain is found at 481–662 (KRPIALIGPP…SYQELLRLIN (182 aa)). ATP is bound at residue 488–495 (GPPNCGQN). A disordered region spans residues 506 to 526 (PDRFAGPVPHTTRSRRDAEAN).

It belongs to the MAGUK family. Expressed in the retina and in the neural tube.

The protein localises to the apical cell membrane. It is found in the cell junction. It localises to the tight junction. Plays a role in tight junction biogenesis and in the establishment of cell polarity in epithelial cells. Also involved in adherens junction biogenesis. Required for polarized epithelial organization, cell-cell adhesion and remodeling of myocardial cells during heart tube elongation during embryogenesis. Functions in cellular patterning of the retina and development of the retinal pigmented epithelium. Also required for embryo body axis specification. The polypeptide is Protein PALS1 (pals1a) (Danio rerio (Zebrafish)).